The primary structure comprises 156 residues: 6,7-dimethyl-8-ribityllumazine synthase (156 aa).

5-amino-6-(D-ribitylamino)uracil is bound by residues Phe25, 59-61 (AWE), and 83-85 (AVI). 88–89 (ST) lines the (2S)-2-hydroxy-3-oxobutyl phosphate pocket. Residue His91 is the Proton donor of the active site. Residue Asn116 coordinates 5-amino-6-(D-ribitylamino)uracil. Position 130 (Arg130) interacts with (2S)-2-hydroxy-3-oxobutyl phosphate.

Belongs to the DMRL synthase family. As to quaternary structure, forms an icosahedral capsid composed of 60 subunits, arranged as a dodecamer of pentamers.

It catalyses the reaction (2S)-2-hydroxy-3-oxobutyl phosphate + 5-amino-6-(D-ribitylamino)uracil = 6,7-dimethyl-8-(1-D-ribityl)lumazine + phosphate + 2 H2O + H(+). The protein operates within cofactor biosynthesis; riboflavin biosynthesis; riboflavin from 2-hydroxy-3-oxobutyl phosphate and 5-amino-6-(D-ribitylamino)uracil: step 1/2. Functionally, catalyzes the formation of 6,7-dimethyl-8-ribityllumazine by condensation of 5-amino-6-(D-ribitylamino)uracil with 3,4-dihydroxy-2-butanone 4-phosphate. This is the penultimate step in the biosynthesis of riboflavin. In Acinetobacter baylyi (strain ATCC 33305 / BD413 / ADP1), this protein is 6,7-dimethyl-8-ribityllumazine synthase.